We begin with the raw amino-acid sequence, 711 residues long: Ribosomal RNA large subunit methyltransferase K/L (711 aa).

One can recognise a THUMP domain in the interval 43–154 (LGYRITLWSR…RGQITIGLNF (112 aa)).

The protein belongs to the methyltransferase superfamily. RlmKL family.

Its subcellular location is the cytoplasm. It catalyses the reaction guanosine(2445) in 23S rRNA + S-adenosyl-L-methionine = N(2)-methylguanosine(2445) in 23S rRNA + S-adenosyl-L-homocysteine + H(+). The enzyme catalyses guanosine(2069) in 23S rRNA + S-adenosyl-L-methionine = N(2)-methylguanosine(2069) in 23S rRNA + S-adenosyl-L-homocysteine + H(+). In terms of biological role, specifically methylates the guanine in position 2445 (m2G2445) and the guanine in position 2069 (m7G2069) of 23S rRNA. In Shewanella sediminis (strain HAW-EB3), this protein is Ribosomal RNA large subunit methyltransferase K/L.